The following is a 180-amino-acid chain: Putative manganese efflux pump MntP (180 aa).

6 helical membrane passes run 6 to 26 (LMAL…GIGL), 34 to 54 (ILQI…TGWL), 67 to 87 (AAVI…WAAW), 102 to 122 (FWGL…AGFT), 131 to 151 (LLAA…GLVF), and 160 to 180 (GERA…KLFF).

This sequence belongs to the MntP (TC 9.B.29) family.

It is found in the cell membrane. In terms of biological role, probably functions as a manganese efflux pump. This is Putative manganese efflux pump MntP from Pelotomaculum thermopropionicum (strain DSM 13744 / JCM 10971 / SI).